Here is a 137-residue protein sequence, read N- to C-terminus: Large ribosomal subunit protein uL16 (137 aa).

The protein belongs to the universal ribosomal protein uL16 family. Part of the 50S ribosomal subunit.

Its function is as follows. Binds 23S rRNA and is also seen to make contacts with the A and possibly P site tRNAs. This Legionella pneumophila (strain Paris) protein is Large ribosomal subunit protein uL16.